Reading from the N-terminus, the 225-residue chain is Membrane protein (225 aa).

Residues 1–20 (MSNETNCTLDFEQSVELFKE) are Virion surface-facing. Residues 21–41 (YNLFITAFLLFLTIILQYGYA) form a helical membrane-spanning segment. Residues 42–51 (TRSKFIYILK) lie on the Intravirion side of the membrane. Residues 52–72 (MIVLWCFWPLNIAVGVISCIY) form a helical membrane-spanning segment. The Virion surface segment spans residues 73 to 77 (PPNTG). The chain crosses the membrane as a helical span at residues 78-98 (GLVAAIILTVFACLSFVGYWI). Over 99 to 225 (QSIRLFKRCR…VATGGSSLYT (127 aa)) the chain is Intravirion.

The protein belongs to the gammacoronaviruses M protein family. In terms of assembly, homomultimer. Interacts with envelope E protein in the budding compartment of the host cell, which is located between endoplasmic reticulum and the Golgi complex. Forms a complex with HE and S proteins. Interacts with nucleocapsid N protein. This interaction probably participates in RNA packaging into the virus.

It is found in the virion membrane. The protein localises to the host Golgi apparatus membrane. Its function is as follows. Component of the viral envelope that plays a central role in virus morphogenesis and assembly via its interactions with other viral proteins. The chain is Membrane protein from Gallus gallus (Chicken).